We begin with the raw amino-acid sequence, 326 residues long: Flap endonuclease 1 (326 aa).

Residues 1 to 98 (MGVQFGDFIP…KTRKVRREMK (98 aa)) are N-domain. Aspartate 27, aspartate 80, glutamate 152, glutamate 154, aspartate 173, aspartate 175, and aspartate 224 together coordinate Mg(2+). The interval 116-245 (EAAKYAKRVS…KRAYELVRSG (130 aa)) is I-domain. The interaction with PCNA stretch occupies residues 317-325 (KQKTLDAWF).

The protein belongs to the XPG/RAD2 endonuclease family. FEN1 subfamily. As to quaternary structure, interacts with PCNA. PCNA stimulates the nuclease activity without altering cleavage specificity. Mg(2+) is required as a cofactor.

In terms of biological role, structure-specific nuclease with 5'-flap endonuclease and 5'-3' exonuclease activities involved in DNA replication and repair. During DNA replication, cleaves the 5'-overhanging flap structure that is generated by displacement synthesis when DNA polymerase encounters the 5'-end of a downstream Okazaki fragment. Binds the unpaired 3'-DNA end and kinks the DNA to facilitate 5' cleavage specificity. Cleaves one nucleotide into the double-stranded DNA from the junction in flap DNA, leaving a nick for ligation. Also involved in the base excision repair (BER) pathway. Acts as a genome stabilization factor that prevents flaps from equilibrating into structures that lead to duplications and deletions. Also possesses 5'-3' exonuclease activity on nicked or gapped double-stranded DNA. This Methanocaldococcus jannaschii (strain ATCC 43067 / DSM 2661 / JAL-1 / JCM 10045 / NBRC 100440) (Methanococcus jannaschii) protein is Flap endonuclease 1.